Reading from the N-terminus, the 511-residue chain is GMP synthase [glutamine-hydrolyzing] (511 aa).

The 191-residue stretch at A5 to N195 folds into the Glutamine amidotransferase type-1 domain. The Nucleophile role is filled by C82. Residues H169 and E171 contribute to the active site. Residues W196 to R386 form the GMPS ATP-PPase domain. Position 223–229 (S223–L229) interacts with ATP.

Homodimer.

It catalyses the reaction XMP + L-glutamine + ATP + H2O = GMP + L-glutamate + AMP + diphosphate + 2 H(+). The protein operates within purine metabolism; GMP biosynthesis; GMP from XMP (L-Gln route): step 1/1. Its function is as follows. Catalyzes the synthesis of GMP from XMP. The chain is GMP synthase [glutamine-hydrolyzing] (guaA) from Borreliella burgdorferi (strain N40) (Borrelia burgdorferi).